Reading from the N-terminus, the 384-residue chain is Cytochrome b (384 aa).

The next 4 membrane-spanning stretches (helical) occupy residues 33–53, 77–98, 113–133, and 178–198; these read YGSLLFLCLIIQIATGLFLAM, WLIRNMHANGASFFFICLYLHI, WNVGVILFLLVMMTAFVGYVL, and FFAFHFLFPFVIAAAAVIHLL. Heme b is bound by residues H83 and H97. Residues H182 and H196 each contribute to the heme b site. A ubiquinone is bound at residue H201. A run of 4 helical transmembrane segments spans residues 226–246, 288–308, 320–340, and 347–367; these read YKDLLGFALMLLALTSLALFT, LGGVLALLFSILVLMVVPILH, LSQMLFWTLVADVLILTWIGG, and FIIIGQVASVLYFMLFLVLMP.

The protein belongs to the cytochrome b family. As to quaternary structure, the cytochrome bc1 complex contains 3 respiratory subunits (MT-CYB, CYC1 and UQCRFS1), 2 core proteins (UQCRC1 and UQCRC2) and probably 6 low-molecular weight proteins. It depends on heme b as a cofactor.

It localises to the mitochondrion inner membrane. In terms of biological role, component of the ubiquinol-cytochrome c reductase complex (complex III or cytochrome b-c1 complex) that is part of the mitochondrial respiratory chain. The b-c1 complex mediates electron transfer from ubiquinol to cytochrome c. Contributes to the generation of a proton gradient across the mitochondrial membrane that is then used for ATP synthesis. The protein is Cytochrome b (mt-cyb) of Anoplogaster cornuta (Common fangtooth).